A 345-amino-acid chain; its full sequence is Succinylglutamate desuccinylase (345 aa).

Zn(2+) contacts are provided by His-63, Glu-66, and His-160. The active site involves Glu-224.

It belongs to the AspA/AstE family. Succinylglutamate desuccinylase subfamily. Requires Zn(2+) as cofactor.

It carries out the reaction N-succinyl-L-glutamate + H2O = L-glutamate + succinate. It participates in amino-acid degradation; L-arginine degradation via AST pathway; L-glutamate and succinate from L-arginine: step 5/5. In terms of biological role, transforms N(2)-succinylglutamate into succinate and glutamate. The chain is Succinylglutamate desuccinylase from Shewanella woodyi (strain ATCC 51908 / MS32).